Here is a 1215-residue protein sequence, read N- to C-terminus: Chromosome segregation protein sudA (1215 aa).

32-39 (GRNGSGKS) is an ATP binding site. Residues 177 to 522 (KIMHETNSKR…LSQMMDHNTS (346 aa)) adopt a coiled-coil conformation. A disordered region spans residues 313-332 (SDNQAAAQESKARHDESLKA). An SMC hinge domain is found at 538 to 650 (EGVYGTLAEL…PNLQVASQYA (113 aa)). The tract at residues 654 to 676 (GVNATTPEGDRSDKRGALTGGFH) is disordered. Residues 684–1091 (DAVKNLAKWR…EEAKHSVENY (408 aa)) adopt a coiled-coil conformation.

It belongs to the SMC family. SMC3 subfamily.

The protein resides in the nucleus. Involved in chromosome segregation in mitosis. The protein is Chromosome segregation protein sudA (sudA) of Emericella nidulans (strain FGSC A4 / ATCC 38163 / CBS 112.46 / NRRL 194 / M139) (Aspergillus nidulans).